The sequence spans 431 residues: Probable oxidoreductase OrdL (431 aa).

This chain is Probable oxidoreductase OrdL (ordL), found in Haemophilus influenzae (strain ATCC 51907 / DSM 11121 / KW20 / Rd).